The primary structure comprises 709 residues: Ribosomal RNA large subunit methyltransferase K/L (709 aa).

Residues 43–154 (LAYRITLWTR…NGVITIAMNF (112 aa)) form the THUMP domain.

This sequence belongs to the methyltransferase superfamily. RlmKL family.

The protein resides in the cytoplasm. The enzyme catalyses guanosine(2445) in 23S rRNA + S-adenosyl-L-methionine = N(2)-methylguanosine(2445) in 23S rRNA + S-adenosyl-L-homocysteine + H(+). It carries out the reaction guanosine(2069) in 23S rRNA + S-adenosyl-L-methionine = N(2)-methylguanosine(2069) in 23S rRNA + S-adenosyl-L-homocysteine + H(+). Its function is as follows. Specifically methylates the guanine in position 2445 (m2G2445) and the guanine in position 2069 (m7G2069) of 23S rRNA. In Shewanella sp. (strain W3-18-1), this protein is Ribosomal RNA large subunit methyltransferase K/L.